The primary structure comprises 309 residues: Elongation factor Ts (309 aa).

The involved in Mg(2+) ion dislocation from EF-Tu stretch occupies residues 82 to 85 (TDFV).

This sequence belongs to the EF-Ts family.

It localises to the cytoplasm. Its function is as follows. Associates with the EF-Tu.GDP complex and induces the exchange of GDP to GTP. It remains bound to the aminoacyl-tRNA.EF-Tu.GTP complex up to the GTP hydrolysis stage on the ribosome. This chain is Elongation factor Ts, found in Rickettsia rickettsii (strain Iowa).